The chain runs to 881 residues: MRVLKYFRAPSSLRHRSSPMAQFLRRFSSSPMANEDEFQSPVEPSQQQSQDCVSESYLIGFVIANIVGLKYYSGRINGREMVGLVREPLNVYDNNAIRVLNTRSEQVGHIERTVAAVLAPMIDSHTIVVEGIVPNTRSNSNRYRIPCQIHVFAKLEASSTVKSTISRGGLVLISESDTSFGLSEAVVVKEQMGNGDKRSVDKIFKLVDENVKLMGKLVAAEPPREVIKSELFAHQKEGLGWLLHREKSGELPPFWEEKDGEFLNTLTNYRSDKRPDPLRGGVFADDMGLGKTLTLLSLIAFDRYGNASTSTPTEEPLDGEGDKIEKKGKKRGRGKSSESVTRKKLKTDDVVGMNVSQKTTLIVCPPSVISAWITQLEEHTVPGILKVYMYHGGERTDDVNELMKYDIVLTTYGTLAVEESWEDSPVKKMEWLRIILDEAHTIKNANAQQSRVVCKLKASRRWAVTGTPIQNGSFDLYSLMAFLRFEPFSIKSYWQSLIQRPLGQGNKKGLSRLQVLMATISLRRTKEKSLIGLPPKTVETCYVELSPEERQLYDHMEGEAKGVVQNLINNGSLMRNYSTVLSIILRLRQLCDDMSLCPPELRSFTTSTSVEDVTDKPELLQKLVAALQDGEDFDCPICISPPTNIIITRCAHIFCRACILQTLQRSKPLCPLCRGSLTQSDLYNAPPPPPDSSNTDGEDAKSSTKSSKVSALLSLLMASRQENPNTKSVVFSQFRKMLLLLETPLKAAGFTILRLDGAMTVKKRTQVIGEFGNPELTGPVVLLASLKASGTGINLTAASRVYLFDPWWNPAVEEQAMDRIHRIGQKQEVKMIRMIARNSIEERVLELQQKKKNLANEAFKRRQKKDEREVNVEDVVALMSL.

The Helicase ATP-binding domain occupies 272-486 (DKRPDPLRGG…YSLMAFLRFE (215 aa)). 285-292 (DDMGLGKT) contacts ATP. The disordered stretch occupies residues 308–343 (STSTPTEEPLDGEGDKIEKKGKKRGRGKSSESVTRK). The DEAH box signature appears at 437 to 440 (DEAH). The segment at 635–674 (CPICISPPTNIIITRCAHIFCRACILQTLQRSKPLCPLCR) adopts an RING-type zinc-finger fold. Residues 681 to 703 (DLYNAPPPPPDSSNTDGEDAKSS) form a disordered region. In terms of domain architecture, Helicase C-terminal spans 711–876 (ALLSLLMASR…EREVNVEDVV (166 aa)).

The protein belongs to the SNF2/RAD54 helicase family. RAD16 subfamily.

The protein localises to the nucleus. Possesses intrinsic ATP-dependent nucleosome-remodeling activity. This activity may be required for transcriptional activation or repression of specific target promoters. This Arabidopsis thaliana (Mouse-ear cress) protein is Putative SWI/SNF-related matrix-associated actin-dependent regulator of chromatin subfamily A member 3-like 1.